A 465-amino-acid chain; its full sequence is MDVHGKKASIIGAKRSGVAAAELLAKSGAKVFVSELGEPGASEAERLADCGIPWEQDGHTDRVCDADFCVVSPGIPRTAGIIRRVLEQGIPLYSEIEAASWFCKARIAGITGTDGKTTTSTLLHRIAEADGMKNDYRAFSVGNIGVPFSSLVLDMAPADLAVVELSSYQLEGCETFRPDVSVITNITPDHLDRYNGDMQLYAAAKFRIYASQRASDTLVYNFDDPLLRAQFSGNGRGFPFRIVPFGIGNDVPGSGSEEAFFYDEGMIRHLTAKGISEVFSGEDFLKSSFRGRHNIYNALAALAAAAALGIEESVARKAISGFSGVEHRQEFVCSLDGVEWINDSKATNVNALLQALDAVPGSIVLIAGGRDKGNDYTVLFDVVRRKVVTVIAIGEAREKILQVFEGITRTAGADTLDDAVALARESAEKGQTVLFSPGCASFDMFENFEERGRLFKRSILALNPC.

112 to 118 (GTDGKTT) contacts ATP.

It belongs to the MurCDEF family.

It is found in the cytoplasm. The catalysed reaction is UDP-N-acetyl-alpha-D-muramoyl-L-alanine + D-glutamate + ATP = UDP-N-acetyl-alpha-D-muramoyl-L-alanyl-D-glutamate + ADP + phosphate + H(+). Its pathway is cell wall biogenesis; peptidoglycan biosynthesis. Its function is as follows. Cell wall formation. Catalyzes the addition of glutamate to the nucleotide precursor UDP-N-acetylmuramoyl-L-alanine (UMA). The protein is UDP-N-acetylmuramoylalanine--D-glutamate ligase of Chlorobium limicola (strain DSM 245 / NBRC 103803 / 6330).